The chain runs to 304 residues: Proteasome subunit beta (304 aa).

Residues 1 to 65 (MTWPHFEQLA…LTPTDAVPHG (65 aa)) constitute a propeptide, removed in mature form; by autocatalysis. Thr66 acts as the Nucleophile in catalysis.

Belongs to the peptidase T1B family. The 20S proteasome core is composed of 14 alpha and 14 beta subunits that assemble into four stacked heptameric rings, resulting in a barrel-shaped structure. The two inner rings, each composed of seven catalytic beta subunits, are sandwiched by two outer rings, each composed of seven alpha subunits. The catalytic chamber with the active sites is on the inside of the barrel. Has a gated structure, the ends of the cylinder being occluded by the N-termini of the alpha-subunits. Is capped by the proteasome-associated ATPase, ARC.

Its subcellular location is the cytoplasm. The catalysed reaction is Cleavage of peptide bonds with very broad specificity.. It participates in protein degradation; proteasomal Pup-dependent pathway. Its activity is regulated as follows. The formation of the proteasomal ATPase ARC-20S proteasome complex, likely via the docking of the C-termini of ARC into the intersubunit pockets in the alpha-rings, may trigger opening of the gate for substrate entry. Interconversion between the open-gate and close-gate conformations leads to a dynamic regulation of the 20S proteasome proteolysis activity. Functionally, component of the proteasome core, a large protease complex with broad specificity involved in protein degradation. The chain is Proteasome subunit beta from Mycobacterium sp. (strain JLS).